The sequence spans 123 residues: Small ribosomal subunit protein uS12 (123 aa).

The disordered stretch occupies residues 1 to 30 (MPTIQQLVRKGRQDKVEKNKTPALEGSPQR). Residues 11–20 (GRQDKVEKNK) are compositionally biased toward basic and acidic residues. At D89 the chain carries 3-methylthioaspartic acid.

The protein belongs to the universal ribosomal protein uS12 family. As to quaternary structure, part of the 30S ribosomal subunit. Contacts proteins S8 and S17. May interact with IF1 in the 30S initiation complex.

Its function is as follows. With S4 and S5 plays an important role in translational accuracy. Functionally, interacts with and stabilizes bases of the 16S rRNA that are involved in tRNA selection in the A site and with the mRNA backbone. Located at the interface of the 30S and 50S subunits, it traverses the body of the 30S subunit contacting proteins on the other side and probably holding the rRNA structure together. The combined cluster of proteins S8, S12 and S17 appears to hold together the shoulder and platform of the 30S subunit. The polypeptide is Small ribosomal subunit protein uS12 (rpsL) (Streptomyces avermitilis (strain ATCC 31267 / DSM 46492 / JCM 5070 / NBRC 14893 / NCIMB 12804 / NRRL 8165 / MA-4680)).